We begin with the raw amino-acid sequence, 120 residues long: UPF0295 protein Exig_0660 (120 aa).

A run of 2 helical transmembrane segments spans residues 16 to 36 (AMFL…LKQF) and 41 to 61 (VILM…YFLI).

This sequence belongs to the UPF0295 family.

The protein localises to the cell membrane. This Exiguobacterium sibiricum (strain DSM 17290 / CCUG 55495 / CIP 109462 / JCM 13490 / 255-15) protein is UPF0295 protein Exig_0660.